The primary structure comprises 178 residues: Adenine phosphoribosyltransferase (178 aa).

Belongs to the purine/pyrimidine phosphoribosyltransferase family. As to quaternary structure, homodimer.

The protein localises to the cytoplasm. It catalyses the reaction AMP + diphosphate = 5-phospho-alpha-D-ribose 1-diphosphate + adenine. It functions in the pathway purine metabolism; AMP biosynthesis via salvage pathway; AMP from adenine: step 1/1. Catalyzes a salvage reaction resulting in the formation of AMP, that is energically less costly than de novo synthesis. The polypeptide is Adenine phosphoribosyltransferase (Helicobacter hepaticus (strain ATCC 51449 / 3B1)).